The sequence spans 251 residues: Cytochrome c oxidase subunit 2 (251 aa).

A propeptide spans 1-15 (removed in mature form); that stretch reads MLDLLRLQLTTFIMN. At 16–30 the chain is on the mitochondrial intermembrane side; that stretch reads DVPTPYACYFQDSAT. Residues 31-64 form a helical membrane-spanning segment; the sequence is PNQEGILELHDNIMFYLLVILGLVSWMLYTIVMT. Over 65-78 the chain is Mitochondrial matrix; it reads YSKNPIAYKYIKHG. A helical membrane pass occupies residues 79–108; that stretch reads QTIEVIWTIFPAVILLIIAFPSFILLYLCD. The Mitochondrial intermembrane portion of the chain corresponds to 109–251; that stretch reads EVISPAMTIK…PKFLEWLNEQ (143 aa). 6 residues coordinate Cu cation: histidine 186, cysteine 221, glutamate 223, cysteine 225, histidine 229, and methionine 232. Residue glutamate 223 participates in Mg(2+) binding.

It belongs to the cytochrome c oxidase subunit 2 family. Component of the cytochrome c oxidase (complex IV, CIV), a multisubunit enzyme composed of 12 subunits. The complex is composed of a catalytic core of 3 subunits COX1, COX2 and COX3, encoded in the mitochondrial DNA, and 9 supernumerary subunits COX4, COX5A (or COX5B), COX6, COX7, COX8, COX9, COX12, COX13 and COX26, which are encoded in the nuclear genome. The complex exists as a monomer or a dimer and forms supercomplexes (SCs) in the inner mitochondrial membrane with a dimer of ubiquinol-cytochrome c oxidoreductase (cytochrome b-c1 complex, complex III, CIII), resulting in 2 different assemblies (supercomplexes III(2)IV and III(2)IV(2)). Requires Cu cation as cofactor. Post-translationally, the N-terminal sequence of COX2 is processed by IMP1.

The protein localises to the mitochondrion inner membrane. It carries out the reaction 4 Fe(II)-[cytochrome c] + O2 + 8 H(+)(in) = 4 Fe(III)-[cytochrome c] + 2 H2O + 4 H(+)(out). In terms of biological role, component of the cytochrome c oxidase, the last enzyme in the mitochondrial electron transport chain which drives oxidative phosphorylation. The respiratory chain contains 3 multisubunit complexes succinate dehydrogenase (complex II, CII), ubiquinol-cytochrome c oxidoreductase (cytochrome b-c1 complex, complex III, CIII) and cytochrome c oxidase (complex IV, CIV), that cooperate to transfer electrons derived from NADH and succinate to molecular oxygen, creating an electrochemical gradient over the inner membrane that drives transmembrane transport and the ATP synthase. Cytochrome c oxidase is the component of the respiratory chain that catalyzes the reduction of oxygen to water. Electrons originating from reduced cytochrome c in the intermembrane space (IMS) are transferred via the dinuclear copper A center (CU(A)) of COX2 and heme A of COX1 to the active site in COX1, a binuclear center (BNC) formed by heme A3 and copper B (CU(B)). The BNC reduces molecular oxygen to 2 water molecules unsing 4 electrons from cytochrome c in the IMS and 4 protons from the mitochondrial matrix. COX2 is a catalytic core subunit which transfers the electrons from cytochrome c via its dinuclear copper A center (CU(A)) to the BNC of the COX1. The chain is Cytochrome c oxidase subunit 2 (COX2) from Saccharomyces cerevisiae (strain ATCC 204508 / S288c) (Baker's yeast).